Here is a 187-residue protein sequence, read N- to C-terminus: Elongation factor P (187 aa).

The protein belongs to the elongation factor P family.

It is found in the cytoplasm. It functions in the pathway protein biosynthesis; polypeptide chain elongation. Its function is as follows. Involved in peptide bond synthesis. Stimulates efficient translation and peptide-bond synthesis on native or reconstituted 70S ribosomes in vitro. Probably functions indirectly by altering the affinity of the ribosome for aminoacyl-tRNA, thus increasing their reactivity as acceptors for peptidyl transferase. This chain is Elongation factor P, found in Mycobacterium ulcerans (strain Agy99).